Here is a 287-residue protein sequence, read N- to C-terminus: MNSKKHLGHTARKRFGQNFLHDTSVIQGIVAAIYPQPNQFLVEIGPGLGALTEPVGELVDHLTVVELDRDLAERLRHHPFLHQKLTVIETDAMQFDFGALYTKENLAEKGQKLRVFGNLPYNISTPLMFHLFKYHDVIQDMHFMLQKEVVKRLCAAPNSKAYGRLTIMAQYFCQVMPVLEVPPSAFKPAPKVDSAVVRLIPHKELPHPVKDLYWLNRVCSQAFNQRRKTLRNALSTLFSPENLTALGIDLNARAENLAIADYARLANWLADNPPADVNKDEILDSEE.

S-adenosyl-L-methionine contacts are provided by N18, L20, G45, E66, D91, and N118.

It belongs to the class I-like SAM-binding methyltransferase superfamily. rRNA adenine N(6)-methyltransferase family. RsmA subfamily.

The protein localises to the cytoplasm. The enzyme catalyses adenosine(1518)/adenosine(1519) in 16S rRNA + 4 S-adenosyl-L-methionine = N(6)-dimethyladenosine(1518)/N(6)-dimethyladenosine(1519) in 16S rRNA + 4 S-adenosyl-L-homocysteine + 4 H(+). Specifically dimethylates two adjacent adenosines (A1518 and A1519) in the loop of a conserved hairpin near the 3'-end of 16S rRNA in the 30S particle. May play a critical role in biogenesis of 30S subunits. The polypeptide is Ribosomal RNA small subunit methyltransferase A (Haemophilus influenzae (strain ATCC 51907 / DSM 11121 / KW20 / Rd)).